The following is a 642-amino-acid chain: Terminase, large subunit (642 aa).

The segment at 1–48 is interaction with the terminase small subunit; the sequence is MISDAQKAANAAGAIATGLLSLIIPVPLTTVQWANKHYYLPKESSYTP. The short motif at 42–51 is the Q motif element; that stretch reads KESSYTPGRW. Positions 76 to 83 match the Walker A motif motif; sequence KSARVGYT. The segment at 166-353 is DNA packaging/ATPase; sequence NYREKSVDVV…LDALKDPNGL (188 aa). The short motif at 174–179 is the Walker B motif element; it reads VVCYDE. The active-site For ATPase activity is the E179. D401 provides a ligand contact to Mg(2+). An endonuclease region spans residues 401-587; the sequence is DSQRNRFEMY…LWDNKKRRNE (187 aa). 491 to 498 provides a ligand contact to ATP; it reads GASVYGKP. The interval 574–585 is basic; it reads KMRLLWDNKKRR. Positions 589–617 are leucine zipper; sequence LDCLVYAYAALRVSVQRWQLDLAVLAKSR. Residues 611–642 form a prohead binding region; the sequence is AVLAKSREEETTRPTLKELAAKLSGGVNGYSR.

Belongs to the lambdavirus large terminase family. Heterotrimer of two small and one large terminase subunits. The catalytically competent terminase is composed of a tetramer of heterotrimers. The tetramer forms a ring structure large enough to encircle duplex DNA. Host IHFA/IHFB induces bending of viral DNA to facilitate the assembly of the terminase tetramer of heterotrimers. Interacts (via N-terminus) with the terminase small subunit (via C-terminus). Interacts (via C-terminus) with the portal protein; this interaction allows the packaging of viral DNA. Requires Mg(2+) as cofactor.

The protein resides in the host cytoplasm. The enzyme catalyses Endonucleolytic cleavage of DNA to give specific double-stranded fragments with terminal 5'-phosphates.. Functionally, the terminase large subunit acts as an ATP driven molecular motor necessary for viral DNA translocation into empty capsids and as an endonuclease that cuts the viral genome from the concetamer to initiate and to end the packaging reaction. The terminase lies at a unique vertex of the procapsid and is composed of two subunits, a small terminase subunit involved in viral DNA recognition (binding to packaging sequence cos), and a large terminase subunit possessing endonucleolytic and ATPase activities (DNA maturation and packaging). The terminase binds cooperatively with the host factor IHFA/IHFB to the cos site at the junction of adjacent viral genomes. The endonuclease activity cleaves the viral DNA generating 5'overhangs of 12 bp in length. The strand separation activity separates the cohesive ends generating the single-stranded 'sticky' ends of the mature genome. IHFA/IHFB is also necessary for the strand separation activity of the terminase. The terminase remains bound to the left end of the genome to be packaged, forming a stable DNA-terminase complex. In a reaction facilitated by the viral assembly catalyst gpFI, the DNA-terminase complex binds to the portal of the procapsid thereby activating the translocase activity of the terminase. The terminase packages the viral DNA into the procapsid until the next cos site on the concatemer reaches the complex. The downstream cos site is then cut generating the mature right end of the genome, the heterotrimer undocks from the DNA-filled head and remains bound to the left end of concatemer's next genome. The protein is Terminase, large subunit (2) of Escherichia coli (Bacteriophage 21).